The sequence spans 217 residues: Adenylate kinase (217 aa).

10 to 15 (GAGKGT) provides a ligand contact to ATP. Residues 30-59 (STGDIFRSNIKNGTELGRKAKEYIDKGLLV) are NMP. AMP is bound by residues Thr31, Arg36, 57 to 59 (LLV), 85 to 88 (GFPR), and Gln92. The interval 126 to 163 (GRRVCSKCGMSYHIVYNQPKVENICDSCNGELIQRDDD) is LID. ATP is bound at residue Arg127. Positions 130 and 133 each coordinate Zn(2+). ATP is bound at residue 136-137 (SY). Residues Cys150 and Cys153 each coordinate Zn(2+). AMP-binding residues include Arg160 and Arg171. Glu199 contributes to the ATP binding site.

The protein belongs to the adenylate kinase family. In terms of assembly, monomer.

Its subcellular location is the cytoplasm. The catalysed reaction is AMP + ATP = 2 ADP. It functions in the pathway purine metabolism; AMP biosynthesis via salvage pathway; AMP from ADP: step 1/1. Catalyzes the reversible transfer of the terminal phosphate group between ATP and AMP. Plays an important role in cellular energy homeostasis and in adenine nucleotide metabolism. This Acetivibrio thermocellus (strain ATCC 27405 / DSM 1237 / JCM 9322 / NBRC 103400 / NCIMB 10682 / NRRL B-4536 / VPI 7372) (Clostridium thermocellum) protein is Adenylate kinase.